The sequence spans 119 residues: Large ribosomal subunit protein uL14 (119 aa).

The protein belongs to the universal ribosomal protein uL14 family. As to quaternary structure, part of the 50S ribosomal subunit. Forms a cluster with proteins L3 and L19. In the 70S ribosome, L14 and L19 interact and together make contacts with the 16S rRNA in bridges B5 and B8.

Its function is as follows. Binds to 23S rRNA. Forms part of two intersubunit bridges in the 70S ribosome. This chain is Large ribosomal subunit protein uL14, found in Wolbachia pipientis wMel.